A 2290-amino-acid polypeptide reads, in one-letter code: Protein Ycf2 (2290 aa).

ATP is bound at residue 1638–1645 (GSIGTGRS).

It belongs to the Ycf2 family.

The protein localises to the plastid. The protein resides in the chloroplast stroma. Functionally, probable ATPase of unknown function. Its presence in a non-photosynthetic plant (Epifagus virginiana) and experiments in tobacco indicate that it has an essential function which is probably not related to photosynthesis. The sequence is that of Protein Ycf2 from Phalaenopsis aphrodite subsp. formosana (Moth orchid).